Reading from the N-terminus, the 88-residue chain is U-scoloptoxin(12)-Sa1a (88 aa).

Residues 1–20 form the signal peptide; sequence MKYMIITVVILFTCALKMFC.

It belongs to the scoloptoxin-12 family. Contains 3 disulfide bonds. As to expression, expressed by the venom gland.

Its subcellular location is the secreted. In Scolopendra alternans (Florida Keys giant centipede), this protein is U-scoloptoxin(12)-Sa1a.